Here is a 300-residue protein sequence, read N- to C-terminus: 4-hydroxy-tetrahydrodipicolinate synthase (300 aa).

Residue Thr-45 coordinates pyruvate. Tyr-140 (proton donor/acceptor) is an active-site residue. The active-site Schiff-base intermediate with substrate is the Lys-169. Val-210 provides a ligand contact to pyruvate.

Belongs to the DapA family. In terms of assembly, homotetramer; dimer of dimers.

The protein localises to the cytoplasm. The enzyme catalyses L-aspartate 4-semialdehyde + pyruvate = (2S,4S)-4-hydroxy-2,3,4,5-tetrahydrodipicolinate + H2O + H(+). It functions in the pathway amino-acid biosynthesis; L-lysine biosynthesis via DAP pathway; (S)-tetrahydrodipicolinate from L-aspartate: step 3/4. Its function is as follows. Catalyzes the condensation of (S)-aspartate-beta-semialdehyde [(S)-ASA] and pyruvate to 4-hydroxy-tetrahydrodipicolinate (HTPA). This is 4-hydroxy-tetrahydrodipicolinate synthase from Helicobacter acinonychis (strain Sheeba).